The primary structure comprises 102 residues: MNIAEFHQNIDQIWDSIEEQLENQDIDADCERQGAVFTITFENRTQIVINKQEPLLELWLASKLGGFHFSYKNGDWLNYEGKRFWDCLAQACAAHGEEVSFA.

The protein belongs to the frataxin family.

Functionally, involved in iron-sulfur (Fe-S) cluster assembly. May act as a regulator of Fe-S biogenesis. In Mannheimia succiniciproducens (strain KCTC 0769BP / MBEL55E), this protein is Iron-sulfur cluster assembly protein CyaY.